The sequence spans 380 residues: Cytochrome b (380 aa).

Transmembrane regions (helical) follow at residues 33 to 53, 77 to 98, 113 to 133, and 178 to 198; these read FGSLLGLCLISQILTGLFLAM, WLIRNLHANGASFFFICIYLHI, WNIGVVLLLLVMATAFVGYVL, and FFAFHFLLPFIVAAMTMLHLL. Heme b contacts are provided by H83 and H97. Heme b-binding residues include H182 and H196. An a ubiquinone-binding site is contributed by H201. Helical transmembrane passes span 226-246, 288-308, 320-340, and 347-367; these read YKDLLGFAAVIILLTCLALFT, LGGVLALLASILVLMVVPILH, VTQFLFWALIANVAILTWIGG, and YIIIGQIASLTYFALFLLIMP.

This sequence belongs to the cytochrome b family. The cytochrome bc1 complex contains 3 respiratory subunits (MT-CYB, CYC1 and UQCRFS1), 2 core proteins (UQCRC1 and UQCRC2) and probably 6 low-molecular weight proteins. Heme b is required as a cofactor.

Its subcellular location is the mitochondrion inner membrane. In terms of biological role, component of the ubiquinol-cytochrome c reductase complex (complex III or cytochrome b-c1 complex) that is part of the mitochondrial respiratory chain. The b-c1 complex mediates electron transfer from ubiquinol to cytochrome c. Contributes to the generation of a proton gradient across the mitochondrial membrane that is then used for ATP synthesis. The chain is Cytochrome b (mt-cyb) from Pagrus major (Red sea bream).